Here is a 75-residue protein sequence, read N- to C-terminus: UPF0352 protein YejL (75 aa).

The protein belongs to the UPF0352 family.

The sequence is that of UPF0352 protein YejL from Salmonella agona (strain SL483).